We begin with the raw amino-acid sequence, 132 residues long: Small ribosomal subunit protein uS11 (132 aa).

The interval 1 to 24 (MAAQKQAARKPRRRDRKSVPVGQA) is disordered. Positions 7–16 (AARKPRRRDR) are enriched in basic residues.

Belongs to the universal ribosomal protein uS11 family. In terms of assembly, part of the 30S ribosomal subunit. Interacts with proteins S7 and S18. Binds to IF-3.

Functionally, located on the platform of the 30S subunit, it bridges several disparate RNA helices of the 16S rRNA. Forms part of the Shine-Dalgarno cleft in the 70S ribosome. The sequence is that of Small ribosomal subunit protein uS11 from Bifidobacterium adolescentis (strain ATCC 15703 / DSM 20083 / NCTC 11814 / E194a).